Consider the following 348-residue polypeptide: MLLGPLMMGLEGTRLSSEERTLLCHPRVGGVILFSRNFQSPEQLRALTDAIHALRRPPLLIAVDQEGGRVQRFREGFTRLPAPGVLAAVYDRDPAQARALSHDMGWLMASELLACGVDFSFAPVLDLGRGVSRVIGDRAFHSRPEAVVHLARGWVAGMRDAGMAAVGKHFPGHGSVAPDSHLELPRDPRARSALEGADLVPFRRLAGDRLPGMMTAHVIYQAIDPLPATFSGYWIGEVLRGELGYEGAVFSDDLGMAAAAEAGPLPRRARAAMEAGCDMVLLCNHPEAVPAVLRHLPDPDPVSDMRLVRLHGRPVVDNWRKLHRLTRWQEAVRRVRGQDPSPEGELEV.

Residues Asp64, Arg72, Arg138, and 168 to 169 each bind substrate; that span reads KH. The Proton donor/acceptor role is filled by His181. Residue Asp252 is the Nucleophile of the active site.

The protein belongs to the glycosyl hydrolase 3 family. NagZ subfamily.

The protein localises to the cytoplasm. The enzyme catalyses Hydrolysis of terminal non-reducing N-acetyl-D-hexosamine residues in N-acetyl-beta-D-hexosaminides.. It participates in cell wall biogenesis; peptidoglycan recycling. Plays a role in peptidoglycan recycling by cleaving the terminal beta-1,4-linked N-acetylglucosamine (GlcNAc) from peptide-linked peptidoglycan fragments, giving rise to free GlcNAc, anhydro-N-acetylmuramic acid and anhydro-N-acetylmuramic acid-linked peptides. This Alkalilimnicola ehrlichii (strain ATCC BAA-1101 / DSM 17681 / MLHE-1) protein is Beta-hexosaminidase.